We begin with the raw amino-acid sequence, 212 residues long: MRVGIDEAGRGALIGPMIVAGVVISDTKLKFLKGIGVKDSKQLTRERREKLFDIVANTVEAFTVVKVFPYEIDNYNLNDLTYDAVSKIILSLSSFNPEIVTVDKVGDEKPVIELINKLGYKSNVVHKADVLFVEASAASIIAKVIRDNYIDELKQVYGDFGSGYPADPRTIKWLKSFYEKNPNPPPIIRRSWKILRSTAPLYYISKEGRRLW.

The region spanning 1–204 (MRVGIDEAGR…LRSTAPLYYI (204 aa)) is the RNase H type-2 domain. Residues Asp6, Glu7, and Asp103 each coordinate a divalent metal cation.

This sequence belongs to the RNase HII family. It depends on Mn(2+) as a cofactor. Requires Mg(2+) as cofactor.

The protein localises to the cytoplasm. It carries out the reaction Endonucleolytic cleavage to 5'-phosphomonoester.. Its function is as follows. Endonuclease that specifically degrades the RNA of RNA-DNA hybrids. The protein is Ribonuclease HII of Saccharolobus solfataricus (strain ATCC 35092 / DSM 1617 / JCM 11322 / P2) (Sulfolobus solfataricus).